Consider the following 531-residue polypeptide: tRNA-2-methylthio-N(6)-dimethylallyladenosine synthase (531 aa).

The interval 1 to 26 (MNEKQRLEQTGQIKTESHPADRKSAL) is disordered. A compositionally biased stretch (basic and acidic residues) spans 15 to 26 (TESHPADRKSAL). Positions 80–198 (RKFYIRTYGC…LPYILHEAYM (119 aa)) constitute an MTTase N-terminal domain. The [4Fe-4S] cluster site is built by Cys-89, Cys-125, Cys-159, Cys-235, Cys-239, and Cys-242. Residues 221–451 (RKGKIKAWVN…NDLVQEIAAK (231 aa)) form the Radical SAM core domain. The 64-residue stretch at 454-517 (KQYEGQVVEV…TWTLTGELVN (64 aa)) folds into the TRAM domain.

It belongs to the methylthiotransferase family. MiaB subfamily. In terms of assembly, monomer. Requires [4Fe-4S] cluster as cofactor.

Its subcellular location is the cytoplasm. It carries out the reaction N(6)-dimethylallyladenosine(37) in tRNA + (sulfur carrier)-SH + AH2 + 2 S-adenosyl-L-methionine = 2-methylsulfanyl-N(6)-dimethylallyladenosine(37) in tRNA + (sulfur carrier)-H + 5'-deoxyadenosine + L-methionine + A + S-adenosyl-L-homocysteine + 2 H(+). Its function is as follows. Catalyzes the methylthiolation of N6-(dimethylallyl)adenosine (i(6)A), leading to the formation of 2-methylthio-N6-(dimethylallyl)adenosine (ms(2)i(6)A) at position 37 in tRNAs that read codons beginning with uridine. This chain is tRNA-2-methylthio-N(6)-dimethylallyladenosine synthase, found in Geobacillus kaustophilus (strain HTA426).